A 448-amino-acid polypeptide reads, in one-letter code: Signal recognition particle 54 kDa protein (448 aa).

Residues 107-114 (GIQGSGKT), 189-193 (DSAGR), and 247-250 (TKLD) contribute to the GTP site.

It belongs to the GTP-binding SRP family. SRP54 subfamily. Part of the signal recognition particle protein translocation system, which is composed of SRP and FtsY. Archaeal SRP consists of a 7S RNA molecule of 300 nucleotides and two protein subunits: SRP54 and SRP19.

The protein localises to the cytoplasm. It catalyses the reaction GTP + H2O = GDP + phosphate + H(+). In terms of biological role, involved in targeting and insertion of nascent membrane proteins into the cytoplasmic membrane. Binds to the hydrophobic signal sequence of the ribosome-nascent chain (RNC) as it emerges from the ribosomes. The SRP-RNC complex is then targeted to the cytoplasmic membrane where it interacts with the SRP receptor FtsY. The protein is Signal recognition particle 54 kDa protein of Thermococcus onnurineus (strain NA1).